The chain runs to 203 residues: AFG2-interacting ribosome maturation factor (203 aa).

In terms of assembly, part of the 55LCC heterohexameric ATPase complex composed at least of AIRIM, AFG2A, AFG2B and CINP. Does not associate with pre-60S ribosomal particles. In terms of processing, phosphorylated on serines by CK2 kinase.

Its subcellular location is the nucleus. It localises to the cytoplasm. In terms of biological role, part of the 55LCC heterohexameric ATPase complex which is chromatin-associated and promotes replisome proteostasis to maintain replication fork progression and genome stability. Required for replication fork progression, sister chromatid cohesion, and chromosome stability. The ATPase activity is specifically enhanced by replication fork DNA and is coupled to cysteine protease-dependent cleavage of replisome substrates in response to replication fork damage. Uses ATPase activity to process replisome substrates in S-phase, facilitating their proteolytic turnover from chromatin to ensure DNA replication and mitotic fidelity. Involved in the cytoplasmic maturation steps of pre-60S ribosomal particles by promoting the release of shuttling protein RSL24D1/RLP24 from the pre-ribosomal particles. This Homo sapiens (Human) protein is AFG2-interacting ribosome maturation factor.